The chain runs to 300 residues: tRNA-cytidine(32) 2-sulfurtransferase (300 aa).

The short motif at 41–46 is the PP-loop motif element; that stretch reads SGGKDS. Cys-116, Cys-119, and Cys-207 together coordinate [4Fe-4S] cluster.

This sequence belongs to the TtcA family. Homodimer. It depends on Mg(2+) as a cofactor. [4Fe-4S] cluster serves as cofactor.

It localises to the cytoplasm. It carries out the reaction cytidine(32) in tRNA + S-sulfanyl-L-cysteinyl-[cysteine desulfurase] + AH2 + ATP = 2-thiocytidine(32) in tRNA + L-cysteinyl-[cysteine desulfurase] + A + AMP + diphosphate + H(+). The protein operates within tRNA modification. Its function is as follows. Catalyzes the ATP-dependent 2-thiolation of cytidine in position 32 of tRNA, to form 2-thiocytidine (s(2)C32). The sulfur atoms are provided by the cysteine/cysteine desulfurase (IscS) system. The chain is tRNA-cytidine(32) 2-sulfurtransferase from Idiomarina loihiensis (strain ATCC BAA-735 / DSM 15497 / L2-TR).